Reading from the N-terminus, the 478-residue chain is Cytochrome c-552 (478 aa).

Residues 1–26 (MTRIKINARRIFSLLIPFFFFTSVHA) form the signal peptide. Histidine 94 is a binding site for heme c. Residues cysteine 122, cysteine 125, and lysine 126 each coordinate heme. Heme c is bound by residues cysteine 160, cysteine 163, histidine 164, cysteine 209, cysteine 212, and histidine 213. Residues glutamate 215, tyrosine 216, lysine 261, and glutamine 263 each coordinate Ca(2+). Tyrosine 216 provides a ligand contact to substrate. Histidine 264 provides a ligand contact to substrate. The heme c site is built by histidine 275, cysteine 282, cysteine 285, histidine 286, histidine 301, cysteine 314, cysteine 317, histidine 318, and histidine 393.

The protein belongs to the cytochrome c-552 family. Ca(2+) serves as cofactor. Heme c is required as a cofactor.

It is found in the periplasm. The enzyme catalyses 6 Fe(III)-[cytochrome c] + NH4(+) + 2 H2O = 6 Fe(II)-[cytochrome c] + nitrite + 8 H(+). It participates in nitrogen metabolism; nitrate reduction (assimilation). In terms of biological role, catalyzes the reduction of nitrite to ammonia, consuming six electrons in the process. The polypeptide is Cytochrome c-552 (Escherichia coli (strain ATCC 8739 / DSM 1576 / NBRC 3972 / NCIMB 8545 / WDCM 00012 / Crooks)).